The chain runs to 147 residues: MIRRRKKVRKLRGSHTHGWGCKKKHRGGGSKGGRGMAGTGKRNKSKWTWTIKYAPDHLGKRGFSRPPEVQREVRTVTLKSIDENLDELLQKGIAYEEEGKIIVDTTQFADKVLGTGKITKPLVIKARAFSSKAEEKIKAAGGEAVLV.

Over residues 1–28 (MIRRRKKVRKLRGSHTHGWGCKKKHRGG) the composition is skewed to basic residues. The interval 1–43 (MIRRRKKVRKLRGSHTHGWGCKKKHRGGGSKGGRGMAGTGKRN) is disordered. Positions 29–38 (GSKGGRGMAG) are enriched in gly residues.

Belongs to the universal ribosomal protein uL15 family. As to quaternary structure, part of the 50S ribosomal subunit.

Binds to the 23S rRNA. This Pyrococcus abyssi (strain GE5 / Orsay) protein is Large ribosomal subunit protein uL15.